We begin with the raw amino-acid sequence, 305 residues long: Acetaldehyde dehydrogenase 5 (305 aa).

11 to 14 contributes to the NAD(+) binding site; the sequence is SGNI. Cys130 serves as the catalytic Acyl-thioester intermediate. Residues 161 to 169 and Asn272 each bind NAD(+); that span reads SIGPGTRAN.

It belongs to the acetaldehyde dehydrogenase family.

It catalyses the reaction acetaldehyde + NAD(+) + CoA = acetyl-CoA + NADH + H(+). The polypeptide is Acetaldehyde dehydrogenase 5 (Dechloromonas aromatica (strain RCB)).